The primary structure comprises 51 residues: Large ribosomal subunit protein eL39 (51 aa).

Residues 1-15 show a composition bias toward basic residues; it reads MPSHKSFRTKQKLAK. A disordered region spans residues 1-21; that stretch reads MPSHKSFRTKQKLAKAARQNR.

This sequence belongs to the eukaryotic ribosomal protein eL39 family. As to quaternary structure, component of the large ribosomal subunit (LSU). Mature yeast ribosomes consist of a small (40S) and a large (60S) subunit. The 40S small subunit contains 1 molecule of ribosomal RNA (18S rRNA) and at least 33 different proteins. The large 60S subunit contains 3 rRNA molecules (25S, 5.8S and 5S rRNA) and at least 46 different proteins. eL39 interacts with yih1.

The protein resides in the cytoplasm. Component of the ribosome, a large ribonucleoprotein complex responsible for the synthesis of proteins in the cell. The small ribosomal subunit (SSU) binds messenger RNAs (mRNAs) and translates the encoded message by selecting cognate aminoacyl-transfer RNA (tRNA) molecules. The large subunit (LSU) contains the ribosomal catalytic site termed the peptidyl transferase center (PTC), which catalyzes the formation of peptide bonds, thereby polymerizing the amino acids delivered by tRNAs into a polypeptide chain. The nascent polypeptides leave the ribosome through a tunnel in the LSU and interact with protein factors that function in enzymatic processing, targeting, and the membrane insertion of nascent chains at the exit of the ribosomal tunnel. The polypeptide is Large ribosomal subunit protein eL39 (rpl39) (Schizosaccharomyces pombe (strain 972 / ATCC 24843) (Fission yeast)).